Consider the following 460-residue polypeptide: MESMPSSLTHQRFGLLNKHLTRTGNTREGRMHTPPVLGFQAIMSNVTVLDNIEPLDFEMDLKTPYPVSFQVSLTGFLMLEIVLGLSSNLTVLALYCMKSNLVSSVSNIVTMNLHVLDVLVCVGCIPLTIVVVLLPLEGNNALICCFHEACVSFASVATAANVLAITLDRYDISVRPANRVLTMGRAVALLGSIWALSFFSFLVPFIEEGFFSQAGNERNQTEAEEPSNEYYTELGLYYHLLAQIPIFFFTAVVMLVTYYKILQALNIRIGTRFHSVPKKKPRKKKTISMTSTQPESTDASQSSAGRNAPLGMRTSVSVIIALRRAVKRHRERRERQKRVFRMSLLIISTFLLCWTPITVLNTVILSVGPSNFTVRLRLGFLVMAYGTTIFHPLLYAFTRQKFQKVLKSKMKKRVVSVVEADPMPNNVVIHNSWIDPKRNKKVTFEETEVRQKCLSSEDVE.

Residues M1 to T74 lie on the Cytoplasmic side of the membrane. Residues G75–Y95 form a helical membrane-spanning segment. Over C96–H114 the chain is Extracellular. A helical transmembrane segment spans residues V115–P135. Residues L136–C144 are Cytoplasmic-facing. A helical transmembrane segment spans residues C145–I165. Residues T166 to R185 are Extracellular-facing. Residues A186–I206 traverse the membrane as a helical segment. Topologically, residues E207 to G235 are cytoplasmic. The helical transmembrane segment at L236–V256 threads the bilayer. At T257–S343 the chain is on the extracellular side. Residues V276 to T286 are compositionally biased toward basic residues. A disordered region spans residues V276–P309. The segment covering I287–G305 has biased composition (polar residues). The chain crosses the membrane as a helical span at residues L344 to I364. Topologically, residues L365–R377 are cytoplasmic. A helical membrane pass occupies residues L378–T398. Residues R399–E460 are Extracellular-facing.

Belongs to the G-protein coupled receptor 1 family.

It localises to the cell membrane. In terms of biological role, orphan G-protein coupled receptor that regulates cilia length and structure in the Kupffer's vesicle leading to the left-right asymmetry development by establishing a directional fluid flow. In Danio rerio (Zebrafish), this protein is G-protein coupled receptor 22 (gpr22a).